The following is a 260-amino-acid chain: Lysozyme D (260 aa).

An N-terminal signal peptide occupies residues 1-19 (MRLLVTLILLIFVLTVSGQ). The segment at 83–148 (GSTTTGGTGS…SGGSSGSGSG (66 aa)) is disordered. 2 stretches are compositionally biased toward gly residues: residues 101–119 (SGSG…GSGT) and 129–147 (SGSG…GSGS).

Belongs to the dictyostelium lysozyme family. In terms of processing, contains disulfide bonds.

The protein resides in the cytoplasmic vesicle lumen. The catalysed reaction is Hydrolysis of (1-&gt;4)-beta-linkages between N-acetylmuramic acid and N-acetyl-D-glucosamine residues in a peptidoglycan and between N-acetyl-D-glucosamine residues in chitodextrins.. Functionally, has antibacterial activity. This is Lysozyme D (alyD-1) from Dictyostelium discoideum (Social amoeba).